The following is a 199-amino-acid chain: Holliday junction branch migration complex subunit RuvA (199 aa).

Residues 1–64 are domain I; it reads MIALLTGKLA…EDAINLYGFR (64 aa). Residues 65-143 are domain II; it reads TMEEKEMFQL…KLGHGPLQQD (79 aa). Positions 144–148 are flexible linker; that stretch reads VAPAD. Residues 149–199 are domain III; sequence AHNDMRDDVVSALVNLGYKEAVVQKTVDEIGVAADATVESLLKQALKKLMK.

This sequence belongs to the RuvA family. In terms of assembly, homotetramer. Forms an RuvA(8)-RuvB(12)-Holliday junction (HJ) complex. HJ DNA is sandwiched between 2 RuvA tetramers; dsDNA enters through RuvA and exits via RuvB. An RuvB hexamer assembles on each DNA strand where it exits the tetramer. Each RuvB hexamer is contacted by two RuvA subunits (via domain III) on 2 adjacent RuvB subunits; this complex drives branch migration. In the full resolvosome a probable DNA-RuvA(4)-RuvB(12)-RuvC(2) complex forms which resolves the HJ.

The protein resides in the cytoplasm. The RuvA-RuvB-RuvC complex processes Holliday junction (HJ) DNA during genetic recombination and DNA repair, while the RuvA-RuvB complex plays an important role in the rescue of blocked DNA replication forks via replication fork reversal (RFR). RuvA specifically binds to HJ cruciform DNA, conferring on it an open structure. The RuvB hexamer acts as an ATP-dependent pump, pulling dsDNA into and through the RuvAB complex. HJ branch migration allows RuvC to scan DNA until it finds its consensus sequence, where it cleaves and resolves the cruciform DNA. The chain is Holliday junction branch migration complex subunit RuvA from Geotalea daltonii (strain DSM 22248 / JCM 15807 / FRC-32) (Geobacter daltonii).